Reading from the N-terminus, the 236-residue chain is 2,3,4,5-tetrahydropyridine-2,6-dicarboxylate N-acetyltransferase (236 aa).

It belongs to the transferase hexapeptide repeat family. DapH subfamily.

It catalyses the reaction (S)-2,3,4,5-tetrahydrodipicolinate + acetyl-CoA + H2O = L-2-acetamido-6-oxoheptanedioate + CoA. Its pathway is amino-acid biosynthesis; L-lysine biosynthesis via DAP pathway; LL-2,6-diaminopimelate from (S)-tetrahydrodipicolinate (acetylase route): step 1/3. Functionally, catalyzes the transfer of an acetyl group from acetyl-CoA to tetrahydrodipicolinate. The chain is 2,3,4,5-tetrahydropyridine-2,6-dicarboxylate N-acetyltransferase from Bacillus velezensis (strain DSM 23117 / BGSC 10A6 / LMG 26770 / FZB42) (Bacillus amyloliquefaciens subsp. plantarum).